Consider the following 573-residue polypeptide: Chromosomal replication initiator protein DnaA (573 aa).

A domain I, interacts with DnaA modulators region spans residues 1–85 (MSQNSSSLLE…TKVLSMRMGR (85 aa)). A domain II region spans residues 85–231 (RSFSLAVSVE…TPAHNPNREV (147 aa)). The interval 91–232 (VSVEPSRDGE…PAHNPNREVS (142 aa)) is disordered. Over residues 116–169 (PYPGQGPQSPQGQQGQQGQHPVQQEVRAHAPAPHQQGQHQAAQHQPPANQAPGQ) the composition is skewed to low complexity. Residues 178-191 (QASQSAGAWEQTHS) are compositionally biased toward polar residues. Residues 202-213 (SPAPVEPPPQPA) are compositionally biased toward pro residues. The segment at 232-448 (SLNPKYTFEN…GALIRVSAYS (217 aa)) is domain III, AAA+ region. ATP-binding residues include Gly-276, Gly-278, Lys-279, and Thr-280. The segment at 449-573 (SLINQPIDKE…TQLIKSRGRN (125 aa)) is domain IV, binds dsDNA.

Belongs to the DnaA family. Oligomerizes as a right-handed, spiral filament on DNA at oriC.

It is found in the cytoplasm. Functionally, plays an essential role in the initiation and regulation of chromosomal replication. ATP-DnaA binds to the origin of replication (oriC) to initiate formation of the DNA replication initiation complex once per cell cycle. Binds the DnaA box (a 9 base pair repeat at the origin) and separates the double-stranded (ds)DNA. Forms a right-handed helical filament on oriC DNA; dsDNA binds to the exterior of the filament while single-stranded (ss)DNA is stabiized in the filament's interior. The ATP-DnaA-oriC complex binds and stabilizes one strand of the AT-rich DNA unwinding element (DUE), permitting loading of DNA polymerase. After initiation quickly degrades to an ADP-DnaA complex that is not apt for DNA replication. Binds acidic phospholipids. In Corynebacterium efficiens (strain DSM 44549 / YS-314 / AJ 12310 / JCM 11189 / NBRC 100395), this protein is Chromosomal replication initiator protein DnaA.